The following is a 488-amino-acid chain: UL37 immediate early glycoprotein (488 aa).

The signal sequence occupies residues 1-22 (MSPVYVNLLGSVGLLAFWYFSY). Acidic residues predominate over residues 83-107 (GEESVTEDTEREDTEEEREDEEEEN). A disordered region spans residues 83-119 (GEESVTEDTEREDTEEEREDEEEENEARTPEVNPMDA). N-linked (GlcNAc...) asparagine; by host glycans are attached at residues N206, N210, N219, N223, N242, N275, N281, N294, N297, N306, N333, N337, N343, N384, and N391. The helical transmembrane segment at 439-459 (ICTVAAGSIALLSLFCILLIG) threads the bilayer.

The protein belongs to the immediate early glycoprotein family. In terms of assembly, interacts with host BAX. Interacts with host RSAD2/viperin; this interaction results in RSAD2/viperin relocalization from the endoplasmic reticulum to the mitochondria, actin cytoskeleton disruption and enhancement of infection. Interacts with host PEX19; this interaction inhibits the peroxisomal-dependent antiviral signaling. Interacts with host CHCHD6; this interaction rewires mitochondria by engaging the conserved MICOS complex.

It localises to the host membrane. Its subcellular location is the host endoplasmic reticulum membrane. The protein resides in the host Golgi apparatus membrane. It is found in the host mitochondrion membrane. The protein localises to the host peroxisome. Multifunctional transmembrane protein that plays several key roles in viral replication. Rapidely traffics from the host endoplasmic reticulum to the outer mitochondrial membrane where it acts to inhibit host immune response, block apoptotic signaling, regulate calcium flux, and induce mitochondrial fragmentation. Sequesters proapoptotic BAX at the outer mitochondrial membrane and prevents cytochrome c release and subsequent initiation of the proapoptotic cascade. Also provoques a calcium efflux from host endoplasmic reticulum and F-actin cytoskeleton disruption. Participates in the increase of host mitochondrial biogenesis, thus promoting viral replication by efficient use of newly made mitochondria. Additionally, a subset of vMIA localizes to peroxisomes, causing fragmentation and blocking peroxisomal MAVS signaling. Mechanistically, inhibits host MAVS oligomerization at peroxisomes in a mitochondrial fission factors (MFF)-dependent manner and in mitochondria independently of mitochondrial fission factors. Plays an essential role in the trafficking of host viperin/RSAD2 from the endoplasmic reticulum to the viral assembly compartment via the mitochondria during viral infection as failure of viperin to localize to the mitochondria results in insufficient lipogenesis and thus reduces viral replication. Functionally, may play a role in escape from the host antiviral response. In Homo sapiens (Human), this protein is UL37 immediate early glycoprotein (UL37).